Here is a 460-residue protein sequence, read N- to C-terminus: MTKSTWHQGELIEVAIADLSDTGDGVGRFAERVVFVPDTVPGDRVLVRLLHVKPNYAHGKLHQLLEPSPHRIRPGCIVADKCGGCQWQHIDYEYQLIAKRHQVIQALQRIGGFAQPPVDPVLVTASSLGYRNKATYPLDVSATGQVQAGYYQKGSHHVVNLNQCPVQDPRLNPLLAQVKQDIQQRDWPIYDEKRHQGQIRHLGLRIGRRTGEILLTLVVKDGNLPGIEQQAQEWLQRYPQLVGVSLNRNPERTNAIFGRETRCIAGVPYLREIFAGLEFQVRPDTFFQVFTETAEALLQVIESQLNLQGHETLIDAYCGIGTLTLPLSKQVRQAIGLELQPEAVQQAIVNAQHNGINNVEFQVGAVEKLLPKMGIIPDVVLLDPPRKGCDRIVIESLLASKPARIVYVSCKVATLARDLKLLCTDGTYTIQRIQSADFFPQTSHVEVAAFLVLSQSGKDN.

The region spanning 5–63 (TWHQGELIEVAIADLSDTGDGVGRFAERVVFVPDTVPGDRVLVRLLHVKPNYAHGKLHQ) is the TRAM domain. [4Fe-4S] cluster is bound by residues cysteine 76, cysteine 82, cysteine 85, and cysteine 164. S-adenosyl-L-methionine-binding residues include glutamine 288, tyrosine 317, glutamate 338, and aspartate 383. Residue cysteine 410 is the Nucleophile of the active site.

Belongs to the class I-like SAM-binding methyltransferase superfamily. RNA M5U methyltransferase family.

This is an uncharacterized protein from Nostoc sp. (strain PCC 7120 / SAG 25.82 / UTEX 2576).